We begin with the raw amino-acid sequence, 291 residues long: Sulfate transport system permease protein CysW (291 aa).

Residues 1 to 22 (MAEVTQLKRYDARPINWGKWFL) are Cytoplasmic-facing. A helical transmembrane segment spans residues 23 to 43 (IGIGMLVSAFILLVPMIYIFV). Over 44-69 (QAFSKGLMPVLQNLADPDMLHAIWLT) the chain is Periplasmic. The 205-residue stretch at 66 to 270 (IWLTVMIALI…MAIITLFLKS (205 aa)) folds into the ABC transmembrane type-1 domain. The helical transmembrane segment at 70–90 (VMIALIAVPVNLVFGILLAWL) threads the bilayer. Residues 91–104 (VTRFNFPGRQLLLT) lie on the Cytoplasmic side of the membrane. Residues 105 to 125 (LLDIPFAVSPVVAGLVYLLFY) traverse the membrane as a helical segment. Topologically, residues 126 to 141 (GSNGPLGGWLDEHNLQ) are periplasmic. The helical transmembrane segment at 142–162 (IMFSWPGMVLVTIFVTCPFVV) threads the bilayer. Residues 163–200 (RELVPVMLSQGSQEDEAAILLGASGWQMFRRVTLPNIR) lie on the Cytoplasmic side of the membrane. A helical membrane pass occupies residues 201 to 221 (WALLYGVVLTNARAIGEFGAV). Topologically, residues 222–247 (SVVSGSIRGETLSLPLQIELLEQDYN) are periplasmic. Residues 248 to 268 (TVGSFTAAALLTLMAIITLFL) traverse the membrane as a helical segment. Topologically, residues 269–291 (KSMLQWRLENQEKRAQQEEHHEH) are cytoplasmic.

The protein belongs to the binding-protein-dependent transport system permease family. CysTW subfamily. The complex is composed of two ATP-binding proteins (CysA), two transmembrane proteins (CysT and CysW) and a solute-binding protein (CysP).

The protein localises to the cell inner membrane. Part of the ABC transporter complex CysAWTP (TC 3.A.1.6.1) involved in sulfate/thiosulfate import. Probably responsible for the translocation of the substrate across the membrane. The protein is Sulfate transport system permease protein CysW (cysW) of Escherichia coli O6:H1 (strain CFT073 / ATCC 700928 / UPEC).